Here is a 388-residue protein sequence, read N- to C-terminus: tRNA (guanine-N(7)-)-methyltransferase non-catalytic subunit (388 aa).

WD repeat units follow at residues 58-102, 112-151, 153-194, and 196-234; these read VEKR…KGDI, VVPK…AIEM, GAIS…DSFF, and GHTE…APRR. Residues 365–388 are disordered; that stretch reads EKKKRRLNEDINGDDGEGPGPSNS.

Belongs to the WD repeat TRM82 family. In terms of assembly, forms a heterodimer with the catalytic subunit.

It is found in the nucleus. Its pathway is tRNA modification; N(7)-methylguanine-tRNA biosynthesis. Required for the formation of N(7)-methylguanine at position 46 (m7G46) in tRNA. In the complex, it is required to stabilize and induce conformational changes of the catalytic subunit. The sequence is that of tRNA (guanine-N(7)-)-methyltransferase non-catalytic subunit from Caenorhabditis elegans.